The sequence spans 413 residues: NAD-dependent dihydropyrimidine dehydrogenase subunit PreT homolog (413 aa).

E287 lines the NAD(+) pocket.

It belongs to the NADH dehydrogenase family. Heterotetramer of 2 PreA and 2 PreT subunits.

The catalysed reaction is 5,6-dihydrouracil + NAD(+) = uracil + NADH + H(+). The enzyme catalyses 5,6-dihydrothymine + NAD(+) = thymine + NADH + H(+). In terms of biological role, involved in pyrimidine base degradation. Catalyzes physiologically the reduction of uracil to 5,6-dihydrouracil (DHU) by using NADH as a specific cosubstrate. It also catalyzes the reverse reaction and the reduction of thymine to 5,6-dihydrothymine (DHT). This Salmonella typhi protein is NAD-dependent dihydropyrimidine dehydrogenase subunit PreT homolog (preT).